Consider the following 342-residue polypeptide: Endoplasmic reticulum junction formation protein lunapark-1 (342 aa).

Residues 1-39 (MGNLFSRNKSPATELERVALSIDDLKKRLQTISSSNTNT) are Cytoplasmic-facing. Positions 13-34 (TELERVALSIDDLKKRLQTISS) form a coiled coil. Residues 40 to 60 (LYYYYMSIVVILSIAMAHTWL) form a helical membrane-spanning segment. Residues 61–68 (RFEDPQKT) lie on the Lumenal side of the membrane. Residues 69-89 (YVACALMLGAIGIVLAGRYVI) form a helical membrane-spanning segment. Residues 90–342 (NGFFSWRTNR…ESKTMETEFH (253 aa)) lie on the Cytoplasmic side of the membrane. A coiled-coil region spans residues 102–136 (QKLENAISQKTTLLDLVKETLKFKEAKEILDRYEK). Residues 161–191 (ADSSMFATPKQEQKRVETPTAQGPNSAMNSM) are disordered. Over residues 179 to 191 (PTAQGPNSAMNSM) the composition is skewed to polar residues. The segment at 236–261 (CSICHTHNGMSTPAEYPYISFRCFEC) adopts a C4-type; plays a role in ER morphology zinc-finger fold. The segment at 278 to 342 (RPPMGPKGIQ…ESKTMETEFH (65 aa)) is disordered. Polar residues predominate over residues 295 to 321 (SENTHNMMENQKPSTDLTPSASQNGSE). A compositionally biased stretch (basic and acidic residues) spans 322–342 (KGSDSENEKVPESKTMETEFH).

The protein belongs to the lunapark family. In terms of tissue distribution, expressed in cell bodies along the ventral cord around the pharynx and the tail both in larvae and adults. Also expressed in muscles and hypodermal cells.

Its subcellular location is the endoplasmic reticulum membrane. Functionally, plays a role in tubular endoplasmic reticulum network formation and maintenance. May be involved in central nervous system development. Has a presynaptic role in neurotransmission. Likely to operate in synaptogenesis by regulating vesicular transport or localization. Required for correct localization of rab-3 and snb-1. In Caenorhabditis elegans, this protein is Endoplasmic reticulum junction formation protein lunapark-1 (lnp-1).